The primary structure comprises 147 residues: Small ribosomal subunit protein uS12 (147 aa).

The protein belongs to the universal ribosomal protein uS12 family. In terms of assembly, part of the 30S ribosomal subunit.

Functionally, with S4 and S5 plays an important role in translational accuracy. Located at the interface of the 30S and 50S subunits. This chain is Small ribosomal subunit protein uS12, found in Methanococcus maripaludis (strain C5 / ATCC BAA-1333).